Consider the following 385-residue polypeptide: 8-amino-7-oxononanoate synthase (385 aa).

Arg21 lines the substrate pocket. Residue 108–109 (GY) coordinates pyridoxal 5'-phosphate. A substrate-binding site is contributed by His133. Pyridoxal 5'-phosphate contacts are provided by Ser179, His207, and Thr233. Residue Lys236 is modified to N6-(pyridoxal phosphate)lysine. Residue Thr350 participates in substrate binding.

This sequence belongs to the class-II pyridoxal-phosphate-dependent aminotransferase family. BioF subfamily. Homodimer. It depends on pyridoxal 5'-phosphate as a cofactor.

It carries out the reaction 6-carboxyhexanoyl-[ACP] + L-alanine + H(+) = (8S)-8-amino-7-oxononanoate + holo-[ACP] + CO2. It functions in the pathway cofactor biosynthesis; biotin biosynthesis. Functionally, catalyzes the decarboxylative condensation of pimeloyl-[acyl-carrier protein] and L-alanine to produce 8-amino-7-oxononanoate (AON), [acyl-carrier protein], and carbon dioxide. The sequence is that of 8-amino-7-oxononanoate synthase from Pectobacterium atrosepticum (strain SCRI 1043 / ATCC BAA-672) (Erwinia carotovora subsp. atroseptica).